Here is a 389-residue protein sequence, read N- to C-terminus: Na(+)/H(+) antiporter NhaA (389 aa).

The next 11 helical transmembrane spans lie at 17 to 37, 59 to 79, 95 to 115, 124 to 144, 154 to 174, 177 to 197, 213 to 233, 261 to 281, 292 to 312, 328 to 348, and 363 to 383; these read ILLL…LAGF, LLLW…GLEV, SLPT…YLLF, AGWA…MALL, VFLL…IALF, SDLS…LVAL, LILW…GVII, FLIL…NMSL, IALG…FVAV, IAPV…IASL, and LGTL…LSKV.

Belongs to the NhaA Na(+)/H(+) (TC 2.A.33) antiporter family.

Its subcellular location is the cell inner membrane. It catalyses the reaction Na(+)(in) + 2 H(+)(out) = Na(+)(out) + 2 H(+)(in). Na(+)/H(+) antiporter that extrudes sodium in exchange for external protons. The chain is Na(+)/H(+) antiporter NhaA from Shewanella oneidensis (strain ATCC 700550 / JCM 31522 / CIP 106686 / LMG 19005 / NCIMB 14063 / MR-1).